The sequence spans 202 residues: Oxopyrrolidines biosynthesis cluster protein O (202 aa).

Its function is as follows. Part of the gene cluster that mediates the biosynthesis of oxopyrrolidines, polyketide-amino acid hybrid compounds with feature structures of tetramic acid. Does not seem to play a role in oxopyrrolidines A and B biosynthesis. The protein is Oxopyrrolidines biosynthesis cluster protein O of Penicillium oxalicum (strain 114-2 / CGMCC 5302) (Penicillium decumbens).